Here is a 457-residue protein sequence, read N- to C-terminus: Reticulophagy regulator 3 (457 aa).

Positions 1 to 24 (MAQRVGEEEQGASGLRRRRSGARC) are disordered. The next 3 membrane-spanning stretches (helical) occupy residues 80–100 (FFALTSLRIIFLVAFGLMIII), 165–185 (PGKFCLLACSFLTFLAVLGGY), and 186–206 (IPGVVLSYLLLLFLLLWPLAI). Residues 291-305 (ENGTFNLSRGQTPLT) are compositionally biased toward polar residues. Disordered stretches follow at residues 291–351 (ENGT…IPST) and 410–457 (AYAE…HSHQ). A compositionally biased stretch (basic and acidic residues) spans 310–326 (DLDRHSDPEESFARDLP). Residues 428–441 (LDTDAEADDFELLD) are compositionally biased toward acidic residues. The LIR motif motif lies at 435-440 (DDFELL). Residues 443-457 (SELSQMDPSSSHSHQ) are compositionally biased toward polar residues.

This sequence belongs to the RETREG family. Interacts with ATG8 family modifier proteins.

The protein resides in the endoplasmic reticulum membrane. Endoplasmic reticulum (ER)-anchored autophagy regulator which exists in an inactive state under basal conditions but is activated following cellular stress. When activated, induces ER fragmentation and mediates ER delivery into lysosomes through sequestration into autophagosomes via interaction with ATG8 family proteins. Promotes ER membrane curvature and ER tubulation required for subsequent ER fragmentation and engulfment into autophagosomes. The sequence is that of Reticulophagy regulator 3 (retreg3) from Xenopus tropicalis (Western clawed frog).